Here is a 249-residue protein sequence, read N- to C-terminus: Proteasome activator complex subunit 1 (249 aa).

Residues 59-102 (APLDIPVPDPVKEKEKEERKKQQEKEEKEEKKKGDEDDKGPPCG) form a disordered region. Positions 68 to 98 (PVKEKEKEERKKQQEKEEKEEKKKGDEDDKG) are enriched in basic and acidic residues.

This sequence belongs to the PA28 family. Heterodimer of PSME1 and PSME2, which forms a hexameric ring. PSME1 can form homoheptamers.

Its function is as follows. Implicated in immunoproteasome assembly and required for efficient antigen processing. The PA28 activator complex enhances the generation of class I binding peptides by altering the cleavage pattern of the proteasome. This chain is Proteasome activator complex subunit 1 (Psme1), found in Mus musculus (Mouse).